Here is a 237-residue protein sequence, read N- to C-terminus: Placenta-expressed transcript 1 protein (237 aa).

An N-terminal signal peptide occupies residues 1–27 (MLSLRSLLPHLGLFLCLALHLSPSLSA). Residues asparagine 30, asparagine 67, asparagine 103, and asparagine 136 are each glycosylated (N-linked (GlcNAc...) asparagine). Residues 145–162 (KMEQVQPSASTPIPESSE) show a composition bias toward polar residues. Positions 145 to 170 (KMEQVQPSASTPIPESSETSQTINTT) are disordered. The GPI-anchor amidated serine moiety is linked to residue serine 218. Residues 219-237 (PLAGALHILLVFLISKLLF) constitute a propeptide, removed in mature form.

Post-translationally, N-glycosylated. GPI-anchored. In terms of tissue distribution, present in hair follicle cells and sebaceous gland of skin, ciliated epithelial cells of trachea and bronchial tube, striated portion of submandibular gland, distal convoluted tubule cells of kidney, ciliated epithelial cells of oviduct, medulla of adrenal gland and anterior lobe of pituitary gland. Expressed in keratinocytes of the hair follicle at the trichilemmal zone corresponding to the terminally differentiated outermost suprabasal outer root sheath (ORS), including that of the sebaceous gland duct (SGD) and the directly adjacent upper distal end of the companion layer (CL). Expression is similar in all hair follicle growth stages. Also detected during both the early and late anagen phases above the bulge of stem cells. Expressed at the leading edge of the epidermal wound. Not expressed in the interfollicular epidermis (IFE), inner root sheath (IRS) and hair fiber. Highly expressed in placenta. Detected in mammary and prostate epithelia and in the pancreas (at protein level).

The protein resides in the apical cell membrane. In terms of biological role, modulates leading keratinocyte migration and cellular adhesion to matrix proteins during a wound-healing response and promotes wound repair. May play a role during trichilemmal differentiation of the hair follicle. The sequence is that of Placenta-expressed transcript 1 protein (Plet1) from Mus musculus (Mouse).